The chain runs to 678 residues: Protein mono-ADP-ribosyltransferase PARP15 (678 aa).

Positions 1–19 (MAAPGPLPAAALSPGAPTP) are enriched in low complexity. The disordered stretch occupies residues 1 to 67 (MAAPGPLPAA…SSRSMSRDNK (67 aa)). Residues 49-58 (GARKASRRSS) are compositionally biased toward basic residues. Macro domains lie at 78–267 (NVVA…TNWS) and 293–464 (CFTA…KKRD). Substrate contacts are provided by residues 312–313 (DI), 324–325 (ST), Arg-331, Val-335, 409–413 (GTGNA), and Gln-449. In terms of domain architecture, PARP catalytic spans 482–678 (LPEHWTDMNH…YPEYLITFTA (197 aa)).

Belongs to the ARTD/PARP family.

The protein localises to the nucleus. The enzyme catalyses L-aspartyl-[protein] + NAD(+) = 4-O-(ADP-D-ribosyl)-L-aspartyl-[protein] + nicotinamide. It carries out the reaction L-glutamyl-[protein] + NAD(+) = 5-O-(ADP-D-ribosyl)-L-glutamyl-[protein] + nicotinamide. Its function is as follows. Mono-ADP-ribosyltransferase that mediates mono-ADP-ribosylation of target proteins. Acts as a negative regulator of transcription. The polypeptide is Protein mono-ADP-ribosyltransferase PARP15 (Homo sapiens (Human)).